A 683-amino-acid chain; its full sequence is U4/U6 small nuclear ribonucleoprotein Prp3 (683 aa).

One can recognise a PWI domain in the interval 1–87 (MALSKRELDE…HSKSSSDRSR (87 aa)). A compositionally biased stretch (basic and acidic residues) spans 73–107 (GRSSRHSKSSSDRSRKRDLKEVFGDDSEISKESSG). Residues 73–135 (GRSSRHSKSS…IPGPPSESPG (63 aa)) form a disordered region. A Glycyl lysine isopeptide (Lys-Gly) (interchain with G-Cter in SUMO2) cross-link involves residue K139. A disordered region spans residues 153-183 (IEERKKQLSFISPPTPQPKTPSSSQPERLPI). Residue S164 is modified to Phosphoserine. Position 167 is a phosphothreonine (T167). Residues K244 and K252 each participate in a glycyl lysine isopeptide (Lys-Gly) (interchain with G-Cter in SUMO2) cross-link. The interval 416 to 550 (NLVEHPAQLN…VHISVYRVRN (135 aa)) is mediates interaction with SART3. S619 is subject to Phosphoserine.

As to quaternary structure, component of the precatalytic spliceosome (spliceosome B complex). Component of the U4/U6-U5 tri-snRNP complex, a building block of the precatalytic spliceosome (spliceosome B complex). The U4/U6-U5 tri-snRNP complex is composed of the U4, U6 and U5 snRNAs and at least PRPF3, PRPF4, PRPF6, PRPF8, PRPF31, SNRNP200, TXNL4A, SNRNP40, SNRPB, SNRPD1, SNRPD2, SNRPD3, SNRPE, SNRPF, SNRPG, DDX23, CD2BP2, PPIH, SNU13, EFTUD2, SART1 and USP39, plus LSM2, LSM3, LSM4, LSM5, LSM6, LSM7 and LSM8. Interacts directly with PRPF4. Part of a heteromeric complex containing PPIH, PRPF3 and PRPF4 that is stable in the absence of RNA. Interacts with SART3; the interaction is direct and recruits the deubiquitinase USP4 to PRPF3. Interacts with PRPF19. Interacts ('Lys-63'-linked polyubiquitinated) with PRPF8 (via the MPN (JAB/Mov34) domain); may stabilize the U4/U6-U5 tri-snRNP complex. Interacts with ERCC6. Ubiquitinated. Undergoes 'Lys-63'-linked polyubiquitination by PRPF19 and deubiquitination by USP4. 'Lys-63'-linked ubiquitination increases the affinity for PRPF8 and may regulate the assembly of the U4/U6-U5 tri-snRNP complex.

It is found in the nucleus. The protein resides in the nucleus speckle. In terms of biological role, plays a role in pre-mRNA splicing as component of the U4/U6-U5 tri-snRNP complex that is involved in spliceosome assembly, and as component of the precatalytic spliceosome (spliceosome B complex). The polypeptide is U4/U6 small nuclear ribonucleoprotein Prp3 (PRPF3) (Bos taurus (Bovine)).